The chain runs to 194 residues: Glycerol-3-phosphate acyltransferase (194 aa).

5 helical membrane passes run 2 to 22 (LIEI…TGLL), 51 to 71 (SVGI…VLAA), 80 to 100 (WIAL…FLGF), 112 to 132 (VFLG…VAVV), and 155 to 175 (FLSG…LVIW).

Belongs to the PlsY family. In terms of assembly, probably interacts with PlsX.

It localises to the cell inner membrane. It carries out the reaction an acyl phosphate + sn-glycerol 3-phosphate = a 1-acyl-sn-glycero-3-phosphate + phosphate. It functions in the pathway lipid metabolism; phospholipid metabolism. Its function is as follows. Catalyzes the transfer of an acyl group from acyl-phosphate (acyl-PO(4)) to glycerol-3-phosphate (G3P) to form lysophosphatidic acid (LPA). This enzyme utilizes acyl-phosphate as fatty acyl donor, but not acyl-CoA or acyl-ACP. This is Glycerol-3-phosphate acyltransferase from Geobacter metallireducens (strain ATCC 53774 / DSM 7210 / GS-15).